A 179-amino-acid chain; its full sequence is Alpha-tubulin N-acetyltransferase (179 aa).

One can recognise an N-acetyltransferase domain in the interval Met-1–Phe-175. Residues Phe-109–Leu-122 and Ser-145–Lys-154 each bind acetyl-CoA.

Belongs to the acetyltransferase ATAT1 family.

It carries out the reaction L-lysyl-[alpha-tubulin] + acetyl-CoA = N(6)-acetyl-L-lysyl-[alpha-tubulin] + CoA + H(+). In terms of biological role, specifically acetylates 'Lys-40' in alpha-tubulin on the lumenal side of microtubules. Promotes microtubule destabilization and accelerates microtubule dynamics; this activity may be independent of acetylation activity. Acetylates alpha-tubulin with a slow enzymatic rate, due to a catalytic site that is not optimized for acetyl transfer. Enters the microtubule through each end and diffuses quickly throughout the lumen of microtubules. Acetylates only long/old microtubules because of its slow acetylation rate since it does not have time to act on dynamically unstable microtubules before the enzyme is released. The chain is Alpha-tubulin N-acetyltransferase from Phytophthora infestans (strain T30-4) (Potato late blight agent).